The primary structure comprises 64 residues: Large ribosomal subunit protein uL29 (64 aa).

The protein belongs to the universal ribosomal protein uL29 family.

This chain is Large ribosomal subunit protein uL29, found in Nitrosomonas europaea (strain ATCC 19718 / CIP 103999 / KCTC 2705 / NBRC 14298).